We begin with the raw amino-acid sequence, 115 residues long: Delta-hexatoxin-Hi1a (115 aa).

An N-terminal signal peptide occupies residues 1–18 (MKVIATLYGLLFLTVVLG). Residues 19–73 (DITEGNENDLVENFREELSEADIPLLKKLEAIEDALLEKDFLPYEEEDRNARPKR) constitute a propeptide that is removed on maturation. Cystine bridges form between C74-C88, C81-C93, C87-C104, and C89-C115.

This sequence belongs to the neurotoxin 06 (delta-actx) family. Expressed by the venom gland.

The protein resides in the secreted. Functionally, neurotoxin that slows inactivation of voltage-gated sodium channels (Nav). In vivo, is lethal to both vertebrates and insects. In Hadronyche infensa (Fraser island funnel-web spider), this protein is Delta-hexatoxin-Hi1a.